A 287-amino-acid polypeptide reads, in one-letter code: Chlorophyll a-b binding protein CP29.2, chloroplastic (287 aa).

The transit peptide at Met-1–Ala-31 directs the protein to the chloroplast. Position 32 is an N2-acetylarginine (Arg-32). The residue at position 37 (Thr-37) is a Phosphothreonine. Trp-55 contributes to the chlorophyll b binding site. Phe-75 lines the chlorophyll a pocket. Thr-109 and Thr-111 each carry phosphothreonine. 2 residues coordinate chlorophyll a: Glu-137 and His-140. A helical transmembrane segment spans residues Trp-143–Gln-163. Residue Leu-177 participates in chlorophyll a binding. A helical membrane pass occupies residues Leu-181–Phe-201. 2 residues coordinate chlorophyll b: Glu-200 and Arg-203. Residues Glu-239, His-242, Arg-244, Gln-256, and His-271 each contribute to the chlorophyll a site. Residues Leu-245–Leu-265 traverse the membrane as a helical segment.

The protein belongs to the light-harvesting chlorophyll a/b-binding (LHC) protein family. In terms of assembly, the LHC complex consists of chlorophyll a-b binding proteins. The cofactor is Binds at least 14 chlorophylls (8 Chl-a and 6 Chl-b) and carotenoids such as lutein and neoxanthin.. Post-translationally, photoregulated by reversible phosphorylation of its threonine residues.

It is found in the plastid. It localises to the chloroplast thylakoid membrane. In terms of biological role, the light-harvesting complex (LHC) functions as a light receptor, it captures and delivers excitation energy to photosystems with which it is closely associated. In Arabidopsis thaliana (Mouse-ear cress), this protein is Chlorophyll a-b binding protein CP29.2, chloroplastic (LHCB4.2).